A 304-amino-acid chain; its full sequence is MWFKNLTLYRFNKPFVVETEALETALADFTFSPCSSQDISKFGFSNALGKKGSSLVHSANNRHLICVTKEEKMLPGQVIKEALEEKVALIEDEENRKLAKKEKDALKDEIITSLLPRAFSRRSQTRALILPELEMILVDSSSATKAEELLALLRKALGSLPVIPLSFKAPVESHLTEWLKNGSAPLPFEMQDEAELKSEADEGGIVRFKQQDLKEDEVLAHLATGKQVHKLALHFGQSIALLLQSDASVKRLKFSEEFRAGNDEVGTDDPMARLDADFALMGSELVALMHALVSALGGLEETQD.

The protein belongs to the RdgC family.

It localises to the cytoplasm. Its subcellular location is the nucleoid. In terms of biological role, may be involved in recombination. This Shewanella putrefaciens (strain CN-32 / ATCC BAA-453) protein is Recombination-associated protein RdgC.